A 100-amino-acid polypeptide reads, in one-letter code: NADH-quinone oxidoreductase subunit K 2 (100 aa).

The next 3 membrane-spanning stretches (helical) occupy residues L4–I24, I28–A48, and I60–L80.

Belongs to the complex I subunit 4L family. NDH-1 is composed of 14 different subunits. Subunits NuoA, H, J, K, L, M, N constitute the membrane sector of the complex.

Its subcellular location is the cell inner membrane. It catalyses the reaction a quinone + NADH + 5 H(+)(in) = a quinol + NAD(+) + 4 H(+)(out). In terms of biological role, NDH-1 shuttles electrons from NADH, via FMN and iron-sulfur (Fe-S) centers, to quinones in the respiratory chain. The immediate electron acceptor for the enzyme in this species is believed to be ubiquinone. Couples the redox reaction to proton translocation (for every two electrons transferred, four hydrogen ions are translocated across the cytoplasmic membrane), and thus conserves the redox energy in a proton gradient. This is NADH-quinone oxidoreductase subunit K 2 from Rhizobium etli (strain ATCC 51251 / DSM 11541 / JCM 21823 / NBRC 15573 / CFN 42).